The chain runs to 356 residues: Peptide-N(4)-(N-acetyl-beta-glucosaminyl)asparagine amidase (356 aa).

Cys129, Cys132, Cys163, and Cys166 together coordinate Zn(2+). The active-site Nucleophile is the Cys189. Active-site residues include His216 and Asp233. Glu236 provides a ligand contact to substrate. The interval 300–356 (IRQNLSPSEKEELKREDEAEERELASYNADEPQEAQMPRQSGSVEWTKARGEGGSDD) is disordered. Composition is skewed to basic and acidic residues over residues 307–316 (SEKEELKRED) and 346–356 (TKARGEGGSDD).

Belongs to the transglutaminase-like superfamily. PNGase family. It depends on Zn(2+) as a cofactor.

The protein resides in the cytoplasm. It catalyses the reaction Hydrolysis of an N(4)-(acetyl-beta-D-glucosaminyl)asparagine residue in which the glucosamine residue may be further glycosylated, to yield a (substituted) N-acetyl-beta-D-glucosaminylamine and a peptide containing an aspartate residue.. Functionally, specifically deglycosylates the denatured form of N-linked glycoproteins in the cytoplasm and assists their proteasome-mediated degradation. Cleaves the beta-aspartyl-glucosamine (GlcNAc) of the glycan and the amide side chain of Asn, converting Asn to Asp. Prefers proteins containing high-mannose over those bearing complex type oligosaccharides. Can recognize misfolded proteins in the endoplasmic reticulum that are exported to the cytosol to be destroyed and deglycosylate them, while it has no activity toward native proteins. Deglycosylation is a prerequisite for subsequent proteasome-mediated degradation of some, but not all, misfolded glycoproteins. The polypeptide is Peptide-N(4)-(N-acetyl-beta-glucosaminyl)asparagine amidase (PNG1) (Yarrowia lipolytica (strain CLIB 122 / E 150) (Yeast)).